Here is a 255-residue protein sequence, read N- to C-terminus: Ribosomal RNA small subunit methyltransferase G (255 aa).

S-adenosyl-L-methionine-binding positions include glycine 89, phenylalanine 94, aspartate 112–threonine 114, valine 140–glutamate 141, and arginine 159.

This sequence belongs to the methyltransferase superfamily. RNA methyltransferase RsmG family.

It is found in the cytoplasm. In terms of biological role, specifically methylates the N7 position of a guanine in 16S rRNA. This is Ribosomal RNA small subunit methyltransferase G from Trichodesmium erythraeum (strain IMS101).